Reading from the N-terminus, the 61-residue chain is Temporin-CG3 (61 aa).

The signal sequence occupies residues 1–22; that stretch reads MFTMKKPLLLLFFLATINLSLC. The propeptide at 23–44 is removed in mature form; it reads EQERNAEEERRDEPDERNAEVE.

This sequence belongs to the frog skin active peptide (FSAP) family. Temporin subfamily. Expressed by the skin glands.

Its subcellular location is the secreted. Functionally, antimicrobial peptide active against a variety of Gram-positive bacterial strains but not against Gram-negative bacteria. Has weak antifungal activity against a slime mold isolate. Has weak hemolytic activity against human erythrocytes. In Amolops chunganensis (Chungan torrent frog), this protein is Temporin-CG3.